The sequence spans 560 residues: Formate--tetrahydrofolate ligase (560 aa).

69 to 76 (TPAGEGKS) lines the ATP pocket.

This sequence belongs to the formate--tetrahydrofolate ligase family.

The enzyme catalyses (6S)-5,6,7,8-tetrahydrofolate + formate + ATP = (6R)-10-formyltetrahydrofolate + ADP + phosphate. The protein operates within one-carbon metabolism; tetrahydrofolate interconversion. This chain is Formate--tetrahydrofolate ligase, found in Listeria monocytogenes serovar 1/2a (strain ATCC BAA-679 / EGD-e).